A 158-amino-acid polypeptide reads, in one-letter code: Protein shisa-like-2B (158 aa).

A helical transmembrane segment spans residues 65–85; the sequence is IGALVGLGIAALVLLAFVISV.

It belongs to the shisa family.

The protein resides in the membrane. In Mus musculus (Mouse), this protein is Protein shisa-like-2B (Shisal2b).